Here is a 165-residue protein sequence, read N- to C-terminus: Shikimate kinase (165 aa).

11 to 16 provides a ligand contact to ATP; sequence GAGKTT. Thr-15 is a Mg(2+) binding site. Residues Asp-33, Arg-57, and Gly-78 each contribute to the substrate site. Arg-116 is a binding site for ATP. Arg-134 contacts substrate.

Belongs to the shikimate kinase family. In terms of assembly, monomer. Mg(2+) serves as cofactor.

It is found in the cytoplasm. It carries out the reaction shikimate + ATP = 3-phosphoshikimate + ADP + H(+). It functions in the pathway metabolic intermediate biosynthesis; chorismate biosynthesis; chorismate from D-erythrose 4-phosphate and phosphoenolpyruvate: step 5/7. Functionally, catalyzes the specific phosphorylation of the 3-hydroxyl group of shikimic acid using ATP as a cosubstrate. The protein is Shikimate kinase of Bacillus cytotoxicus (strain DSM 22905 / CIP 110041 / 391-98 / NVH 391-98).